A 139-amino-acid polypeptide reads, in one-letter code: Large ribosomal subunit protein uL16c (139 aa).

The protein belongs to the universal ribosomal protein uL16 family. As to quaternary structure, part of the 50S ribosomal subunit.

Its subcellular location is the plastid. The protein localises to the chloroplast. This Cicer arietinum (Chickpea) protein is Large ribosomal subunit protein uL16c.